The following is a 395-amino-acid chain: Pyridinium-3,5-bisthiocarboxylic acid mononucleotide nickel insertion protein (395 aa).

This sequence belongs to the LarC family.

It carries out the reaction Ni(II)-pyridinium-3,5-bisthiocarboxylate mononucleotide = pyridinium-3,5-bisthiocarboxylate mononucleotide + Ni(2+). Functionally, involved in the biosynthesis of a nickel-pincer cofactor ((SCS)Ni(II) pincer complex). Binds Ni(2+), and functions in nickel delivery to pyridinium-3,5-bisthiocarboxylic acid mononucleotide (P2TMN), to form the mature cofactor. Is thus probably required for the activation of nickel-pincer cofactor-dependent enzymes. The protein is Pyridinium-3,5-bisthiocarboxylic acid mononucleotide nickel insertion protein of Staphylococcus epidermidis (strain ATCC 35984 / DSM 28319 / BCRC 17069 / CCUG 31568 / BM 3577 / RP62A).